The primary structure comprises 389 residues: Teichoic acid ribitol-phosphate primase (389 aa).

This sequence belongs to the CDP-glycerol glycerophosphotransferase family.

It localises to the cell membrane. It carries out the reaction 4-O-[(2R)-glycerylphospho]-N-acetyl-beta-D-mannosaminyl-(1-&gt;4)-N-acetyl-alpha-D-glucosaminyl di-trans,octa-cis-undecaprenyl diphosphate + CDP-L-ribitol = 4-O-[1-D-ribitylphospho-(2R)-1-glycerylphospho]-N-acetyl-beta-D-mannosaminyl-(1-&gt;4)-N-acetyl-alpha-D-glucosaminyl di-trans,octa-cis-undecaprenyl diphosphate + CMP + H(+). The protein operates within cell wall biogenesis; poly(ribitol phosphate) teichoic acid biosynthesis. In terms of biological role, catalyzes the addition of a single ribitol phosphate unit onto the glycerol phosphate of the linkage unit, as a primer for polymerisation by TarL. In Bacillus spizizenii (strain ATCC 23059 / NRRL B-14472 / W23) (Bacillus subtilis subsp. spizizenii), this protein is Teichoic acid ribitol-phosphate primase (tarK).